The sequence spans 87 residues: Small ribosomal subunit protein bS16 (87 aa).

Belongs to the bacterial ribosomal protein bS16 family.

The chain is Small ribosomal subunit protein bS16 from Nitrosospira multiformis (strain ATCC 25196 / NCIMB 11849 / C 71).